The chain runs to 321 residues: PI-PLC X domain-containing protein 3 (321 aa).

Positions 22-197 (SMHSIPLTNL…DYQVLVFYHS (176 aa)) constitute a PI-PLC X-box domain. Catalysis depends on residues histidine 37 and histidine 114.

In terms of tissue distribution, expressed at highest levels in heart. Also detected in kidney, lung, small intestine and colon. Expressed at very low levels, if any, in leukocytes, thymus and skeletal muscle.

The protein localises to the cytoplasm. The sequence is that of PI-PLC X domain-containing protein 3 (PLCXD3) from Homo sapiens (Human).